Consider the following 1164-residue polypeptide: DNA-directed RNA polymerase 132 kDa polypeptide (1164 aa).

It belongs to the RNA polymerase beta chain family. In terms of assembly, the DNA-dependent RNA polymerase used for intermediate and late genes expression consists of eight subunits (147) kDa, (133) kDa, (35) kDa, (30) kDa, (22) kDa, (19) kDa, (18) kDa and (7) kDa totalling more than 500 kDa in mass. The same holoenzyme, with the addition of the transcription-specificity factor RAP94, is used for early gene expression.

It localises to the virion. It carries out the reaction RNA(n) + a ribonucleoside 5'-triphosphate = RNA(n+1) + diphosphate. Part of the DNA-dependent RNA polymerase which catalyzes the transcription of viral DNA into RNA using the four ribonucleoside triphosphates as substrates. Responsible for the transcription of early, intermediate and late genes. DNA-dependent RNA polymerase associates with the early transcription factor (ETF), itself composed of D6 and A7, thereby allowing the early genes transcription. Late transcription, and probably also intermediate transcription, require newly synthesized RNA polymerase. The protein is DNA-directed RNA polymerase 132 kDa polypeptide (RPO132) of Bos taurus (Bovine).